A 512-amino-acid polypeptide reads, in one-letter code: 2,3-bisphosphoglycerate-independent phosphoglycerate mutase (512 aa).

The Mn(2+) site is built by Asp13 and Ser63. Residue Ser63 is the Phosphoserine intermediate of the active site. Substrate-binding positions include His124, Arg154–Asp155, Arg186, Arg192, Arg262–Arg265, and Lys337. The Mn(2+) site is built by Asp404, His408, Asp445, His446, and His463.

It belongs to the BPG-independent phosphoglycerate mutase family. As to quaternary structure, monomer. Mn(2+) is required as a cofactor.

It catalyses the reaction (2R)-2-phosphoglycerate = (2R)-3-phosphoglycerate. It functions in the pathway carbohydrate degradation; glycolysis; pyruvate from D-glyceraldehyde 3-phosphate: step 3/5. In terms of biological role, essential for rapid growth and for sporulation. Catalyzes the interconversion of 2-phosphoglycerate and 3-phosphoglycerate. The protein is 2,3-bisphosphoglycerate-independent phosphoglycerate mutase of Oceanobacillus iheyensis (strain DSM 14371 / CIP 107618 / JCM 11309 / KCTC 3954 / HTE831).